Consider the following 276-residue polypeptide: MLTTTVDGLWVLQAVTGVEQTCPELGLRPLLPRLDTAERALRHPVAAELMAVGALDQAGNADPMVREWLTVLLRRDLGLLVTIGVPGGEPTRAAICRFATWWVVLERHGNLVRLYPAGTASDEAGAGELVVGQVERLCGVAEAAPLRPVTVDADELLHAVRDAGTLRSYLLSQRLDVDQLQMVTMAADPTRSAHATLVALQAGVGPEKSARILVGDSTVAIVDTAAGRICVESVTSGQRRYQVLSPGSRSDIGGAVQRLIRRLPAGDEWYSYRRVV.

This sequence belongs to the EspG family. Interacts specifically with ESX-2-dependent PE/PPE proteins.

The protein localises to the cytoplasm. In terms of biological role, specific chaperone for cognate PE/PPE proteins. Plays an important role in preventing aggregation of PE/PPE dimers. The chain is ESX-2 secretion-associated protein EspG2 from Mycobacterium tuberculosis (strain CDC 1551 / Oshkosh).